We begin with the raw amino-acid sequence, 95 residues long: Co-chaperonin GroES (95 aa).

Belongs to the GroES chaperonin family. As to quaternary structure, heptamer of 7 subunits arranged in a ring. Interacts with the chaperonin GroEL.

It localises to the cytoplasm. Its function is as follows. Together with the chaperonin GroEL, plays an essential role in assisting protein folding. The GroEL-GroES system forms a nano-cage that allows encapsulation of the non-native substrate proteins and provides a physical environment optimized to promote and accelerate protein folding. GroES binds to the apical surface of the GroEL ring, thereby capping the opening of the GroEL channel. In Streptococcus salivarius, this protein is Co-chaperonin GroES.